Here is a 397-residue protein sequence, read N- to C-terminus: UPF0261 protein mlr3387 (397 aa).

Belongs to the UPF0261 family.

This is UPF0261 protein mlr3387 from Mesorhizobium japonicum (strain LMG 29417 / CECT 9101 / MAFF 303099) (Mesorhizobium loti (strain MAFF 303099)).